Here is a 618-residue protein sequence, read N- to C-terminus: Polyamine transporter TPO5 (618 aa).

The Cytoplasmic portion of the chain corresponds to 1–60 (MPEYTLLADNIRENIVHFDPNGLFDNLHTIVHEDDSQENEEAEHFNYDQVLDKSLLSRGS). A helical membrane pass occupies residues 61 to 84 (IVGLGLGLMSPVLGMCTSMAIGLI). Over 85–90 (NGGPLT) the chain is Extracellular. A helical membrane pass occupies residues 91 to 110 (IMLGFLISGVCIWFSSLSLG). Over 111–131 (EIVSKFPMELHVGSAMLAPEK) the chain is Cytoplasmic. Residues 132 to 148 (LKLVCSWYTGWLMLIGN) traverse the membrane as a helical segment. Topologically, residues 149 to 154 (WTMSTS) are extracellular. The chain crosses the membrane as a helical span at residues 155-171 (ITFAGAQLTISLILMTN). Topologically, residues 172–179 (SNLISEAH) are cytoplasmic. The chain crosses the membrane as a helical span at residues 180 to 200 (LIFYTVIVFYLVVTVVGLVNL). At 201–211 (KFARFIETINK) the chain is on the extracellular side. The helical transmembrane segment at 212–231 (VCVYWIIYAIIFIDILLLVF) threads the bilayer. Over 232 to 297 (HKGKFRSLKY…EKDIPRGMSN (66 aa)) the chain is Cytoplasmic. The helical transmembrane segment at 298 to 317 (AVLLSAFSGVIFLIPIMLIL) threads the bilayer. The Extracellular segment spans residues 318–342 (PDNDLLFTNHKVLPIVNIFTKSTDS). Residues 343 to 367 (VVLSFFLVLLILGNLLFSGIGSITT) traverse the membrane as a helical segment. Residues 368–402 (SSRAVYSFSRDQAIPYYDKWTYVEPDSQSKVPKNS) are Cytoplasmic-facing. The helical transmembrane segment at 403 to 419 (VVLSMIISYFLGLLALI) threads the bilayer. The Extracellular segment spans residues 420-425 (STAAFN). A helical transmembrane segment spans residues 426 to 449 (AFIGAAVLCLCSATFIPLVLVLFT). The Cytoplasmic segment spans residues 450 to 464 (RRRAIRSAPVKIRYK). The helical transmembrane segment at 465–486 (FGWFINIVSIVWLLLSMVSVCL) threads the bilayer. Residues 487 to 498 (PTQVPVTFKTMN) are Extracellular-facing. A helical membrane pass occupies residues 499–516 (YALMVYVFCILVITGLYF). Residues 517–618 (KWGKYNFRLP…DLADDRRYDI (102 aa)) are Cytoplasmic-facing. The residue at position 569 (S569) is a Phosphoserine. A disordered region spans residues 576-618 (VHPKSSTENPFEENEENVITDYGDEHHTAEQEFDLADDRRYDI). A compositionally biased stretch (basic and acidic residues) spans 598–618 (GDEHHTAEQEFDLADDRRYDI).

Belongs to the amino acid-polyamine-organocation (APC) superfamily.

The protein localises to the golgi apparatus membrane. Its function is as follows. Required for polyamine transport. Transports putrescine effectively and spermidine less effectively. This chain is Polyamine transporter TPO5 (TPO5), found in Saccharomyces cerevisiae (strain ATCC 204508 / S288c) (Baker's yeast).